We begin with the raw amino-acid sequence, 311 residues long: Acetaldehyde dehydrogenase 2 (311 aa).

An NAD(+)-binding site is contributed by 11–14 (SGNI). C131 acts as the Acyl-thioester intermediate in catalysis. Residues 162-170 (SAGPGTRAN) and N289 each bind NAD(+).

The protein belongs to the acetaldehyde dehydrogenase family.

The enzyme catalyses acetaldehyde + NAD(+) + CoA = acetyl-CoA + NADH + H(+). The sequence is that of Acetaldehyde dehydrogenase 2 (mhpF) from Azotobacter vinelandii (strain DJ / ATCC BAA-1303).